The sequence spans 480 residues: uncharacterized protein (480 aa).

Residue K222 is modified to N6-(pyridoxal phosphate)lysine.

The protein belongs to the Orn/Lys/Arg decarboxylase class-I family. Pyridoxal 5'-phosphate is required as a cofactor.

This is an uncharacterized protein from Bacillus subtilis (strain 168).